The following is a 135-amino-acid chain: UPF0355 protein SAV0387 (135 aa).

This sequence belongs to the UPF0355 family.

The chain is UPF0355 protein SAV0387 from Staphylococcus aureus (strain Mu50 / ATCC 700699).